The chain runs to 289 residues: 4-hydroxy-tetrahydrodipicolinate synthase (289 aa).

Thr46 is a binding site for pyruvate. The active-site Proton donor/acceptor is the Tyr134. Residue Lys162 is the Schiff-base intermediate with substrate of the active site. Val204 provides a ligand contact to pyruvate.

Belongs to the DapA family. As to quaternary structure, homotetramer; dimer of dimers.

The protein resides in the cytoplasm. It carries out the reaction L-aspartate 4-semialdehyde + pyruvate = (2S,4S)-4-hydroxy-2,3,4,5-tetrahydrodipicolinate + H2O + H(+). It functions in the pathway amino-acid biosynthesis; L-lysine biosynthesis via DAP pathway; (S)-tetrahydrodipicolinate from L-aspartate: step 3/4. In terms of biological role, catalyzes the condensation of (S)-aspartate-beta-semialdehyde [(S)-ASA] and pyruvate to 4-hydroxy-tetrahydrodipicolinate (HTPA). This chain is 4-hydroxy-tetrahydrodipicolinate synthase, found in Bacillus velezensis (strain DSM 23117 / BGSC 10A6 / LMG 26770 / FZB42) (Bacillus amyloliquefaciens subsp. plantarum).